The chain runs to 190 residues: Potassium-transporting ATPase KdpC subunit (190 aa).

The helical transmembrane segment at 10–30 (TFIFLLLITGGVYPLLTTVLG) threads the bilayer.

Belongs to the KdpC family. In terms of assembly, the system is composed of three essential subunits: KdpA, KdpB and KdpC.

The protein resides in the cell inner membrane. Part of the high-affinity ATP-driven potassium transport (or Kdp) system, which catalyzes the hydrolysis of ATP coupled with the electrogenic transport of potassium into the cytoplasm. This subunit acts as a catalytic chaperone that increases the ATP-binding affinity of the ATP-hydrolyzing subunit KdpB by the formation of a transient KdpB/KdpC/ATP ternary complex. This chain is Potassium-transporting ATPase KdpC subunit, found in Escherichia coli (strain K12 / MC4100 / BW2952).